The primary structure comprises 449 residues: Allantoinase (449 aa).

Residues His-61, His-63, Lys-148, His-184, His-240, and Asp-313 each coordinate Zn(2+). Position 148 is an N6-carboxylysine (Lys-148).

This sequence belongs to the metallo-dependent hydrolases superfamily. Allantoinase family. In terms of assembly, homotetramer. Zn(2+) is required as a cofactor. In terms of processing, carboxylation allows a single lysine to coordinate two zinc ions.

It catalyses the reaction (S)-allantoin + H2O = allantoate + H(+). The protein operates within nitrogen metabolism; (S)-allantoin degradation; allantoate from (S)-allantoin: step 1/1. Catalyzes the conversion of allantoin (5-ureidohydantoin) to allantoic acid by hydrolytic cleavage of the five-member hydantoin ring. In Desulfitobacterium hafniense (strain DSM 10664 / DCB-2), this protein is Allantoinase.